The primary structure comprises 253 residues: Ribosomal RNA small subunit methyltransferase J (253 aa).

Residues 123 to 124 (ER) and D176 contribute to the S-adenosyl-L-methionine site.

Belongs to the methyltransferase superfamily. RsmJ family.

It localises to the cytoplasm. The enzyme catalyses guanosine(1516) in 16S rRNA + S-adenosyl-L-methionine = N(2)-methylguanosine(1516) in 16S rRNA + S-adenosyl-L-homocysteine + H(+). Its function is as follows. Specifically methylates the guanosine in position 1516 of 16S rRNA. This chain is Ribosomal RNA small subunit methyltransferase J, found in Magnetococcus marinus (strain ATCC BAA-1437 / JCM 17883 / MC-1).